The following is a 203-amino-acid chain: MITTQTLPTLQPSDTSWVILAGGQASRMGGQDKGLIQLNGQPLVQHVIDKLAPQTPTLLINANRNQSQYQQFAPVISDEFPDYPGPLGGIHAGLSHAPTDWVGFVPCDSPLICDDLVARFCQAVKPESDILVAHDGEHQQPVFTLFHKRVLPKLSAFLARGDRKIILLYDECHTSYVDFSDAPSCFFNLNTPQELAQFGALHP.

GTP-binding positions include 20–22, lysine 33, asparagine 61, aspartate 78, and aspartate 108; that span reads LAG. Aspartate 108 is a binding site for Mg(2+).

Belongs to the MobA family. As to quaternary structure, monomer. Mg(2+) is required as a cofactor.

The protein localises to the cytoplasm. It carries out the reaction Mo-molybdopterin + GTP + H(+) = Mo-molybdopterin guanine dinucleotide + diphosphate. Its function is as follows. Transfers a GMP moiety from GTP to Mo-molybdopterin (Mo-MPT) cofactor (Moco or molybdenum cofactor) to form Mo-molybdopterin guanine dinucleotide (Mo-MGD) cofactor. The sequence is that of Molybdenum cofactor guanylyltransferase from Vibrio cholerae serotype O1 (strain ATCC 39315 / El Tor Inaba N16961).